The primary structure comprises 152 residues: UPF0756 membrane protein Helmi_09930 (152 aa).

A run of 5 helical transmembrane segments spans residues 6 to 26 (VLLILILLLGVIARSPMTALA), 52 to 72 (TGLIMLTLAMLAPFATGKVGL), 75 to 95 (VLLSFASLPGIIAVIGGVLAT), 111 to 131 (IIVGMIVGSLLGIVLFGGIPV), and 132 to 152 (GPLMAGGLTALILQIYGWLSK).

It belongs to the UPF0756 family.

The protein resides in the cell membrane. The polypeptide is UPF0756 membrane protein Helmi_09930 (Heliobacterium modesticaldum (strain ATCC 51547 / Ice1)).